The chain runs to 319 residues: Acetyl-coenzyme A carboxylase carboxyl transferase subunit alpha (319 aa).

The 262-residue stretch at 35-296 folds into the CoA carboxyltransferase C-terminal domain; that stretch reads NIDEEVHRLR…KAQLLADLAD (262 aa).

It belongs to the AccA family. In terms of assembly, acetyl-CoA carboxylase is a heterohexamer composed of biotin carboxyl carrier protein (AccB), biotin carboxylase (AccC) and two subunits each of ACCase subunit alpha (AccA) and ACCase subunit beta (AccD).

The protein resides in the cytoplasm. It catalyses the reaction N(6)-carboxybiotinyl-L-lysyl-[protein] + acetyl-CoA = N(6)-biotinyl-L-lysyl-[protein] + malonyl-CoA. Its pathway is lipid metabolism; malonyl-CoA biosynthesis; malonyl-CoA from acetyl-CoA: step 1/1. In terms of biological role, component of the acetyl coenzyme A carboxylase (ACC) complex. First, biotin carboxylase catalyzes the carboxylation of biotin on its carrier protein (BCCP) and then the CO(2) group is transferred by the carboxyltransferase to acetyl-CoA to form malonyl-CoA. This is Acetyl-coenzyme A carboxylase carboxyl transferase subunit alpha from Shigella sonnei (strain Ss046).